We begin with the raw amino-acid sequence, 365 residues long: DNA replication and repair protein RecF (365 aa).

30–37 (GDNGEGKT) provides a ligand contact to ATP.

The protein belongs to the RecF family.

The protein localises to the cytoplasm. Functionally, the RecF protein is involved in DNA metabolism; it is required for DNA replication and normal SOS inducibility. RecF binds preferentially to single-stranded, linear DNA. It also seems to bind ATP. This Leptospira interrogans serogroup Icterohaemorrhagiae serovar Lai (strain 56601) protein is DNA replication and repair protein RecF.